The primary structure comprises 334 residues: MAVDITLLFRASVKTVKTRNKALGVAVGGGADGSRDELFRRSPRPKGDFSSRAREVISHIGKLRDFLLEHRKEYINAYSHTMSEYGRMTDTERDQIDQDAQIFMRTCKDAIQQLRTEAHKEIHSQQVKEHRTAVLDFVEDYLKRVCKLYSEQRAIRVKRVVDKKRLSKLEPEPHTKRKEPASEKSSHNASQDSEEKPAAEDLPEKPLAESQPELGTWGDGKGEDELSPEEIQMFEQENQRLIGEMNSLFDEVRQIEGKVVEISRLQEIFTEKVLQQETEIDSIHQLVVGATENIKEGNEDIREAIKNNAGFRVWILFFLVMCSFSLLFLDWYDS.

The Cytoplasmic portion of the chain corresponds to 1–308; it reads MAVDITLLFR…EDIREAIKNN (308 aa). Disordered stretches follow at residues 29–50 and 166–225; these read GGAD…GDFS and LSKL…GEDE. Composition is skewed to basic and acidic residues over residues 33 to 50, 166 to 186, and 193 to 207; these read GSRD…GDFS, LSKL…EKSS, and SEEK…EKPL. The t-SNARE coiled-coil homology domain maps to 242 to 304; sequence IGEMNSLFDE…KEGNEDIREA (63 aa). A helical; Anchor for type IV membrane protein transmembrane segment spans residues 309 to 329; that stretch reads AGFRVWILFFLVMCSFSLLFL. Topologically, residues 330 to 334 are vesicular; the sequence is DWYDS.

This sequence belongs to the syntaxin family. In terms of assembly, component of a SNARE complex consisting of STX18, USE1L, BNIP1/SEC20L, and SEC22B. RINT1/TIP20L and ZW10 are associated with the complex through interaction with BNIP1/SEC20L. Interacts directly with USE1L and BNIP1/SEC20L.

The protein resides in the endoplasmic reticulum membrane. It localises to the golgi apparatus membrane. Syntaxin that may be involved in targeting and fusion of Golgi-derived retrograde transport vesicles with the ER. The sequence is that of Syntaxin-18 (Stx18) from Rattus norvegicus (Rat).